The primary structure comprises 70 residues: Small ribosomal subunit protein bS21B (70 aa).

A disordered region spans residues 37-70; that stretch reads SYEKPTTERKRKKAAAVARLRKQVRRSMPPKKKY. Over residues 45-70 the composition is skewed to basic residues; sequence RKRKKAAAVARLRKQVRRSMPPKKKY.

Belongs to the bacterial ribosomal protein bS21 family.

In Burkholderia pseudomallei (strain K96243), this protein is Small ribosomal subunit protein bS21B.